Here is a 177-residue protein sequence, read N- to C-terminus: ATP synthase subunit delta (177 aa).

Belongs to the ATPase delta chain family. F-type ATPases have 2 components, F(1) - the catalytic core - and F(0) - the membrane proton channel. F(1) has five subunits: alpha(3), beta(3), gamma(1), delta(1), epsilon(1). F(0) has three main subunits: a(1), b(2) and c(10-14). The alpha and beta chains form an alternating ring which encloses part of the gamma chain. F(1) is attached to F(0) by a central stalk formed by the gamma and epsilon chains, while a peripheral stalk is formed by the delta and b chains.

It localises to the cell inner membrane. Its function is as follows. F(1)F(0) ATP synthase produces ATP from ADP in the presence of a proton or sodium gradient. F-type ATPases consist of two structural domains, F(1) containing the extramembraneous catalytic core and F(0) containing the membrane proton channel, linked together by a central stalk and a peripheral stalk. During catalysis, ATP synthesis in the catalytic domain of F(1) is coupled via a rotary mechanism of the central stalk subunits to proton translocation. Functionally, this protein is part of the stalk that links CF(0) to CF(1). It either transmits conformational changes from CF(0) to CF(1) or is implicated in proton conduction. The polypeptide is ATP synthase subunit delta (Neisseria gonorrhoeae (strain NCCP11945)).